Here is an 86-residue protein sequence, read N- to C-terminus: Small ribosomal subunit protein eS21 (86 aa).

This sequence belongs to the eukaryotic ribosomal protein eS21 family. As to quaternary structure, component of the 40S small ribosomal subunit.

Its subcellular location is the cytoplasm. It localises to the cytosol. The protein localises to the rough endoplasmic reticulum. The sequence is that of Small ribosomal subunit protein eS21 (RPS21) from Suberites domuncula (Sponge).